We begin with the raw amino-acid sequence, 372 residues long: tRNA-specific 2-thiouridylase MnmA (372 aa).

ATP-binding positions include 16–23 (GMSGGVDS) and methionine 42. The segment at 102–104 (NPD) is interaction with target base in tRNA. Cysteine 107 functions as the Nucleophile in the catalytic mechanism. Cysteine 107 and cysteine 205 are oxidised to a cystine. Glycine 132 contacts ATP. The tract at residues 155-157 (KDQ) is interaction with tRNA. Cysteine 205 acts as the Cysteine persulfide intermediate in catalysis. The interaction with tRNA stretch occupies residues 317–318 (RY).

The protein belongs to the MnmA/TRMU family.

The protein resides in the cytoplasm. It carries out the reaction S-sulfanyl-L-cysteinyl-[protein] + uridine(34) in tRNA + AH2 + ATP = 2-thiouridine(34) in tRNA + L-cysteinyl-[protein] + A + AMP + diphosphate + H(+). Functionally, catalyzes the 2-thiolation of uridine at the wobble position (U34) of tRNA, leading to the formation of s(2)U34. In Shewanella putrefaciens (strain CN-32 / ATCC BAA-453), this protein is tRNA-specific 2-thiouridylase MnmA.